Here is a 624-residue protein sequence, read N- to C-terminus: Phosphatidylinositol 4-kinase lsb6 (624 aa).

The span at 1 to 31 (MESTFHSDTLDSFPNYQENSLNTNEEQTNPL) shows a compositional bias: polar residues. The disordered stretch occupies residues 1–53 (MESTFHSDTLDSFPNYQENSLNTNEEQTNPLESLRDGWASSNSSSSSSLLLPD). A compositionally biased stretch (low complexity) spans 40–51 (SSNSSSSSSLLL). Positions 145 to 520 (GVFPVLISKG…LLELPNLYVV (376 aa)) constitute a PI3K/PI4K catalytic domain. The tract at residues 151-157 (ISKGSSG) is G-loop. The segment at 346–354 (RNTDRNLDN) is catalytic loop. The activation loop stretch occupies residues 409–429 (AIDNSLAFPYKHPDSWRSFPY).

This sequence belongs to the PI3/PI4-kinase family. It depends on Mg(2+) as a cofactor. Mn(2+) serves as cofactor.

The protein localises to the cell membrane. It localises to the vacuole membrane. It is found in the golgi apparatus membrane. The catalysed reaction is a 1,2-diacyl-sn-glycero-3-phospho-(1D-myo-inositol) + ATP = a 1,2-diacyl-sn-glycero-3-phospho-(1D-myo-inositol 4-phosphate) + ADP + H(+). May play a role in endocytic and/or exocytic pathways. In Schizosaccharomyces pombe (strain 972 / ATCC 24843) (Fission yeast), this protein is Phosphatidylinositol 4-kinase lsb6 (lsb6).